We begin with the raw amino-acid sequence, 275 residues long: Putative ankyrin repeat protein L715 (275 aa).

4 ANK repeats span residues 94–123 (NINYGLCQAIENYHLKIVELLIDHGADINY), 124–153 (NNGLPLNLAVKNGYYDIIELLIEKKVNTND), 155–183 (IFQLLTHCCQNNLPNSLRILLKENISIDP), and 184–213 (IYSTMVNLCLDNGYAECASILINHNNSDST). The tract at residues 253-275 (NQDESDVGDDAENDIENDIEDDN) is disordered. A compositionally biased stretch (acidic residues) spans 255–275 (DESDVGDDAENDIENDIEDDN).

The sequence is that of Putative ankyrin repeat protein L715 from Acanthamoeba polyphaga mimivirus (APMV).